The sequence spans 158 residues: MSQELNSMFSPHSRLRHAVADTFAMVVYCSVVGMMIEIFVSGMSFEQSLSSRLVAIPVNMVIAWPYGLYRDAVMRLAARVGKGRLVRNLADVIAYITFQSPVYAAILLFVGADIPQIITAVSSNIVVSMMMGAAYGYFLDYCRRLFRVSPAAPVSAQA.

4 consecutive transmembrane segments (helical) span residues 23–43 (FAMV…VSGM), 53–73 (LVAI…RDAV), 92–112 (VIAY…FVGA), and 117–137 (IITA…AYGY).

Belongs to the AlaE exporter family.

It localises to the cell inner membrane. Its function is as follows. Exports L-alanine. The protein is L-alanine exporter AlaE of Cronobacter sakazakii (strain ATCC BAA-894) (Enterobacter sakazakii).